The sequence spans 254 residues: Thiazole synthase (254 aa).

Lys96 serves as the catalytic Schiff-base intermediate with DXP. 1-deoxy-D-xylulose 5-phosphate is bound by residues Gly157, 183–184, and 205–206; these read AG and NT.

Belongs to the ThiG family. In terms of assembly, homotetramer. Forms heterodimers with either ThiH or ThiS.

It is found in the cytoplasm. The catalysed reaction is [ThiS sulfur-carrier protein]-C-terminal-Gly-aminoethanethioate + 2-iminoacetate + 1-deoxy-D-xylulose 5-phosphate = [ThiS sulfur-carrier protein]-C-terminal Gly-Gly + 2-[(2R,5Z)-2-carboxy-4-methylthiazol-5(2H)-ylidene]ethyl phosphate + 2 H2O + H(+). The protein operates within cofactor biosynthesis; thiamine diphosphate biosynthesis. Catalyzes the rearrangement of 1-deoxy-D-xylulose 5-phosphate (DXP) to produce the thiazole phosphate moiety of thiamine. Sulfur is provided by the thiocarboxylate moiety of the carrier protein ThiS. In vitro, sulfur can be provided by H(2)S. The polypeptide is Thiazole synthase (Clostridium perfringens (strain 13 / Type A)).